Here is a 345-residue protein sequence, read N- to C-terminus: N-acetyl-gamma-glutamyl-phosphate reductase (345 aa).

Cysteine 149 is an active-site residue.

The protein belongs to the NAGSA dehydrogenase family. Type 1 subfamily.

It is found in the cytoplasm. It catalyses the reaction N-acetyl-L-glutamate 5-semialdehyde + phosphate + NADP(+) = N-acetyl-L-glutamyl 5-phosphate + NADPH + H(+). It functions in the pathway amino-acid biosynthesis; L-arginine biosynthesis; N(2)-acetyl-L-ornithine from L-glutamate: step 3/4. Functionally, catalyzes the NADPH-dependent reduction of N-acetyl-5-glutamyl phosphate to yield N-acetyl-L-glutamate 5-semialdehyde. This is N-acetyl-gamma-glutamyl-phosphate reductase from Bacillus thuringiensis subsp. konkukian (strain 97-27).